The chain runs to 136 residues: Class I hydrophobin 16 (136 aa).

The first 19 residues, 1 to 19 (MKFTSVIALVATAATLVGA), serve as a signal peptide directing secretion. Cystine bridges form between C58/C115, C65/C109, C66/C99, and C116/C129. A glycan (N-linked (GlcNAc...) asparagine) is linked at N74.

It belongs to the fungal hydrophobin family. As to quaternary structure, self-assembles to form functional amyloid fibrils called rodlets. Self-assembly into fibrillar rodlets occurs spontaneously at hydrophobic:hydrophilic interfaces and the rodlets further associate laterally to form amphipathic monolayers.

The protein localises to the secreted. Its subcellular location is the cell wall. Functionally, aerial growth, conidiation, and dispersal of filamentous fungi in the environment rely upon a capability of their secreting small amphipathic proteins called hydrophobins (HPBs) with low sequence identity. Class I can self-assemble into an outermost layer of rodlet bundles on aerial cell surfaces, conferring cellular hydrophobicity that supports fungal growth, development and dispersal; whereas Class II form highly ordered films at water-air interfaces through intermolecular interactions but contribute nothing to the rodlet structure. Hydph16 is a class I hydrophobin that has specific functions in aerial mycelium formation, cell wall stress protection, and cell wall structure formation, but does not seem to be involved in mycelial hydrophobicity. Specifically functions in resisting cell wall synthesis inhibitors. The sequence is that of Class I hydrophobin 16 from Pleurotus ostreatus (strain PC15) (Oyster mushroom).